Here is a 546-residue protein sequence, read N- to C-terminus: Sodium/hydrogen exchanger 2 (546 aa).

The Cytoplasmic segment spans residues 1 to 21 (MTMFASLTSKMLSVSTSDHAS). Residues 22-42 (VVSLNLFVALLCACIVIGHLL) traverse the membrane as a helical segment. The Vacuolar segment spans residues 43 to 47 (EENRW). A helical transmembrane segment spans residues 48–68 (MNESITALLIGLGTGVVILLI). The Cytoplasmic portion of the chain corresponds to 69–75 (SRGKNSH). Residues 76-96 (LLVFSEDLFFIYLLPPIIFNA) constitute an intramembrane region (helical). Topologically, residues 97–111 (GFQVKKKQFFRNFVT) are cytoplasmic. A helical transmembrane segment spans residues 112–132 (IMAFGAIGTVVSCTIISLGAI). Topologically, residues 133 to 148 (QFFKKLDIGTFDLGDF) are vacuolar. 2 consecutive intramembrane regions (helical) follow at residues 149–168 (LAIG…QVLN) and 174–194 (LLYS…VVLF). Residues 195–218 (NAIQSFDLTHLNHEAAFQFLGNFF) are Vacuolar-facing. A helical transmembrane segment spans residues 219-239 (YLFLLSTGLGVATGLISAYVI). Topologically, residues 240-264 (KKLYFGRHSTDREVALMMLMAYLSY) are cytoplasmic. Residues 265–285 (MLAELFALSGILTVFFCGIVM) form a helical membrane-spanning segment. The Vacuolar segment spans residues 286 to 304 (SHYTWHNVTESSRITTKHA). An N-linked (GlcNAc...) asparagine glycan is attached at asparagine 292. The helical transmembrane segment at 305–325 (FATLSFLAETFIFLYVGMDAL) threads the bilayer. Residues 326–344 (DIEKWRFVSDSPGTSVAVS) are Cytoplasmic-facing. The helical transmembrane segment at 345-365 (SILMGLVMLGRAAFVFPLSFL) threads the bilayer. The Vacuolar segment spans residues 366–381 (SNLAKKHQSEKISIKQ). Residues 382–402 (QVVIWWAGLMRGAVSMALAYN) form a helical membrane-spanning segment. Residues 403 to 415 (KFTRSGHTELRGN) lie on the Cytoplasmic side of the membrane. The chain crosses the membrane as a helical span at residues 416-436 (AIMITSTITVCLFSTMVFGML). Topologically, residues 437 to 546 (TKPLIRYLMP…ERSSHDLSKP (110 aa)) are vacuolar.

The protein belongs to the monovalent cation:proton antiporter 1 (CPA1) transporter (TC 2.A.36) family. In terms of tissue distribution, expressed in roots and shoots.

It is found in the vacuole membrane. The catalysed reaction is Na(+)(in) + H(+)(out) = Na(+)(out) + H(+)(in). It carries out the reaction K(+)(in) + H(+)(out) = K(+)(out) + H(+)(in). Functionally, acts in low affinity electroneutral exchange of protons for cations such as Na(+) or K(+) across membranes. May also exchange Li(+) and Cs(+) with a lower affinity. Involved in vacuolar ion compartmentalization necessary for cell volume regulation and cytoplasmic Na(+) detoxification. The sequence is that of Sodium/hydrogen exchanger 2 (NHX2) from Arabidopsis thaliana (Mouse-ear cress).